We begin with the raw amino-acid sequence, 536 residues long: Phosphoenolpyruvate carboxykinase (ATP) (536 aa).

Residues Arg61, Tyr195, and Lys201 each contribute to the substrate site. ATP-binding positions include Lys201, His220, and 236–244 (GLSGTGKTT). Residues Lys201 and His220 each contribute to the Mn(2+) site. Residue Asp257 coordinates Mn(2+). Residues Glu285, Arg322, and Thr447 each coordinate ATP. Arg322 provides a ligand contact to substrate.

Belongs to the phosphoenolpyruvate carboxykinase (ATP) family. It depends on Mn(2+) as a cofactor.

The protein localises to the cytoplasm. It catalyses the reaction oxaloacetate + ATP = phosphoenolpyruvate + ADP + CO2. It functions in the pathway carbohydrate biosynthesis; gluconeogenesis. Involved in the gluconeogenesis. Catalyzes the conversion of oxaloacetate (OAA) to phosphoenolpyruvate (PEP) through direct phosphoryl transfer between the nucleoside triphosphate and OAA. This is Phosphoenolpyruvate carboxykinase (ATP) from Brucella anthropi (strain ATCC 49188 / DSM 6882 / CCUG 24695 / JCM 21032 / LMG 3331 / NBRC 15819 / NCTC 12168 / Alc 37) (Ochrobactrum anthropi).